The following is an 88-amino-acid chain: Small ribosomal subunit protein bS20 (88 aa).

The protein belongs to the bacterial ribosomal protein bS20 family.

Its function is as follows. Binds directly to 16S ribosomal RNA. This chain is Small ribosomal subunit protein bS20, found in Desulforudis audaxviator (strain MP104C).